A 312-amino-acid chain; its full sequence is 2-phospho-L-lactate transferase (312 aa).

Residues aspartate 50 and lysine 89 each contribute to the 7,8-didemethyl-8-hydroxy-5-deazariboflavin site.

Belongs to the CofD family. Homodimer. Mg(2+) serves as cofactor.

It catalyses the reaction (2S)-lactyl-2-diphospho-5'-guanosine + 7,8-didemethyl-8-hydroxy-5-deazariboflavin = oxidized coenzyme F420-0 + GMP + H(+). It participates in cofactor biosynthesis; coenzyme F420 biosynthesis. Its function is as follows. Catalyzes the transfer of the 2-phospholactate moiety from (2S)-lactyl-2-diphospho-5'-guanosine to 7,8-didemethyl-8-hydroxy-5-deazariboflavin (FO) with the formation of oxidized coenzyme F420-0 and GMP. The polypeptide is 2-phospho-L-lactate transferase (Methanococcus vannielii (strain ATCC 35089 / DSM 1224 / JCM 13029 / OCM 148 / SB)).